Here is a 157-residue protein sequence, read N- to C-terminus: uncharacterized protein (157 aa).

This is an uncharacterized protein from Bacillus subtilis (strain 168).